The sequence spans 133 residues: Ribulose bisphosphate carboxylase small subunit (133 aa).

The protein belongs to the RuBisCO small chain family. In terms of assembly, heterohexadecamer of 8 large and 8 small subunits.

Its function is as follows. RuBisCO catalyzes two reactions: the carboxylation of D-ribulose 1,5-bisphosphate, the primary event in carbon dioxide fixation, as well as the oxidative fragmentation of the pentose substrate. Both reactions occur simultaneously and in competition at the same active site. Although the small subunit is not catalytic it is essential for maximal activity. This is Ribulose bisphosphate carboxylase small subunit from Xanthobacter flavus.